A 147-amino-acid chain; its full sequence is MATMRRICFLFVFNLAVATSTQGISDEISPDIPETSQAVIDGHRLKGSSKVSKATTGSEERFIRSQLQFLINKIFGARGVAKVLVEEGPKSGVFNKLKEILVKISKFEMKGDMLYMVYIYTILFLSIPIILGVAMYINHHVESSYIH.

A signal peptide spans 1–23; the sequence is MATMRRICFLFVFNLAVATSTQG. Positions 58–61 match the dEER motif; the sequence is SEER. Residues 117–137 form a helical membrane-spanning segment; it reads VYIYTILFLSIPIILGVAMYI.

It belongs to the RxLR effector family. As to quaternary structure, interacts with host transcription factor NAC069.

The protein localises to the secreted. The protein resides in the host membrane. Functionally, secreted effector that inhibits stress-induced relocalization of the transcription factor NAC069 to the nucleus, thus affecting its broad role in abiotic and biotic stress responses. The polypeptide is Secreted RxLR effector protein BLN04 (Bremia lactucae (Lettuce downy mildew)).